The following is a 218-amino-acid chain: N-(5'-phosphoribosyl)anthranilate isomerase (218 aa).

The protein belongs to the TrpF family.

It carries out the reaction N-(5-phospho-beta-D-ribosyl)anthranilate = 1-(2-carboxyphenylamino)-1-deoxy-D-ribulose 5-phosphate. Its pathway is amino-acid biosynthesis; L-tryptophan biosynthesis; L-tryptophan from chorismate: step 3/5. The protein is N-(5'-phosphoribosyl)anthranilate isomerase of Rhodopseudomonas palustris (strain HaA2).